The chain runs to 628 residues: Nucleoside-triphosphatase 2 (628 aa).

A signal peptide spans 1–25 (MWLPVYVPLLLVFGVSLSLPHGSLG). The active-site Proton acceptor is Glu236. N-linked (GlcNAc...) asparagine glycosylation is present at Asn432.

This sequence belongs to the GDA1/CD39 NTPase family. In terms of assembly, homotetramer.

The protein localises to the secreted. It is found in the parasitophorous vacuole. The catalysed reaction is a ribonucleoside 5'-triphosphate + H2O = a ribonucleoside 5'-diphosphate + phosphate + H(+). Its function is as follows. May perform an important processing step in the conversion of high energy nucleotides prior to uptake by the parasite. NTPAse-II has a specific activity 4.5-fold lower than NTPAse-I in hydrolysis of ATP. The primary difference between these isozymes lies in their ability to hydrolyze nucleoside triphosphate versus diphosphate substrates. While NTPAse-II hydrolyzes ATP to ADP and ADP to AMP at almost the same rate, NTPAse-I hydrolyzes ADP to AMP at a much slower rate (0.7% of the rate for ATP). The sequence is that of Nucleoside-triphosphatase 2 (NTP1) from Toxoplasma gondii.